Here is a 378-residue protein sequence, read N- to C-terminus: MNKKMGKIVAGTALIISVAFSSSIAQAAEEAKEKYLIGFKEQEVMSQFVDQIDGDEYSISSQAEDVEIDLLHEFDFIPVLSVELDPEDVDALELDPAIAYIEEDAEVTTMQTVPWGINRVQAPIAQSRGFTGTGVRVAVLDTGISNHADLRIRGGASFVPGEPNISDGNGHGTQVAGTIAALNNSIGVLGVAPNVDLYGVKVLGASGSGSISGIAQGLQWAANNGMHIANMSLGSSAGSATMEQAVNQATASGVLVVAASGNSGAGNVGFPARYANAMAVGATDQNNNRATFSQYGAGLDIVAPGVGVQSTVPGNGYASFNGTSMATPHVAGVAALVKQKNPSWSNVQIRNHLKNTATNLGNTTQFGSGLVNAEAATR.

The signal sequence occupies residues 1 to 27 (MNKKMGKIVAGTALIISVAFSSSIAQA). A propeptide spanning residues 28–110 (AEEAKEKYLI…IEEDAEVTTM (83 aa)) is cleaved from the precursor. Q111 contacts Ca(2+). Residues 114-377 (PWGINRVQAP…SGLVNAEAAT (264 aa)) form the Peptidase S8 domain. The active-site Charge relay system is D141. Residue D149 coordinates Ca(2+). The Charge relay system role is filled by H171. Residues L182, N184, I186, V188, A272, Y274, and A277 each coordinate Ca(2+). S324 functions as the Charge relay system in the catalytic mechanism.

This sequence belongs to the peptidase S8 family. It depends on Ca(2+) as a cofactor.

It is found in the secreted. In terms of biological role, digests elastin efficiently, has a substrate preference for Ala in P1 position. The chain is Alkaline elastase YaB (ale) from Bacillus sp. (strain YaB).